Consider the following 181-residue polypeptide: Inner membrane-spanning protein YciB (181 aa).

5 helical membrane-spanning segments follow: residues 24–44, 49–69, 81–101, 119–139, and 149–169; these read SATAVAIVATFAQIGWVWLRH, NMLWVSLAIIIVFGGATLILQ, LYWLFAVILFLAHSFFGKNLI, LNISWSVFFGAMGALNLYVAY, and FKLFGFMGLMFVFIILQALLL.

This sequence belongs to the YciB family.

Its subcellular location is the cell inner membrane. In terms of biological role, plays a role in cell envelope biogenesis, maintenance of cell envelope integrity and membrane homeostasis. In Nitrosomonas eutropha (strain DSM 101675 / C91 / Nm57), this protein is Inner membrane-spanning protein YciB.